We begin with the raw amino-acid sequence, 151 residues long: Large-conductance mechanosensitive channel (151 aa).

The next 2 membrane-spanning stretches (helical) occupy residues 12–32 (GNIV…ALVT) and 71–91 (VLLS…FLVV). Residues 122-151 (AQTNGDSPGRHGGRGTPSPTDGPRASTESQ) are disordered.

It belongs to the MscL family. Homopentamer.

It is found in the cell membrane. In terms of biological role, channel that opens in response to stretch forces in the membrane lipid bilayer. May participate in the regulation of osmotic pressure changes within the cell. The protein is Large-conductance mechanosensitive channel of Mycobacterium tuberculosis (strain CDC 1551 / Oshkosh).